The following is a 107-amino-acid chain: Ubiquitin-related modifier 1 (107 aa).

Gly107 carries the post-translational modification 1-thioglycine. Gly107 participates in a covalent cross-link: Glycyl lysine isopeptide (Gly-Lys) (interchain with K-? in acceptor proteins).

Belongs to the URM1 family. Post-translationally, C-terminal thiocarboxylation occurs in 2 steps, it is first acyl-adenylated (-COAMP) via the hesA/moeB/thiF part of UBA4, then thiocarboxylated (-COSH) via the rhodanese domain of UBA4.

It localises to the cytoplasm. It participates in tRNA modification; 5-methoxycarbonylmethyl-2-thiouridine-tRNA biosynthesis. Functionally, acts as a sulfur carrier required for 2-thiolation of mcm(5)S(2)U at tRNA wobble positions of cytosolic tRNA(Lys), tRNA(Glu) and tRNA(Gln). Serves as sulfur donor in tRNA 2-thiolation reaction by being thiocarboxylated (-COSH) at its C-terminus by the MOCS3 homolog UBA4. The sulfur is then transferred to tRNA to form 2-thiolation of mcm(5)S(2)U. Prior mcm(5) tRNA modification by the elongator complex is required for 2-thiolation. Also acts as a ubiquitin-like protein (UBL) that is covalently conjugated via an isopeptide bond to lysine residues of target proteins such as AHP1. The thiocarboxylated form serves as substrate for conjugation and oxidative stress specifically induces the formation of UBL-protein conjugates. The protein is Ubiquitin-related modifier 1 of Mycosarcoma maydis (Corn smut fungus).